A 1760-amino-acid polypeptide reads, in one-letter code: Cilia- and flagella-associated protein 44 (1760 aa).

WD repeat units lie at residues 119–160 (GATK…MVLR), 163–202 (CHNTDVYTVLFSPFDSGLLVSGGAGHIKFWTMANTFTGLK), 213–251 (LEISNVSGFVVLSDGKVISGSESGLIILWEGDLIRCCFA), 276–315 (CHEGAINVVELMEGGRVLMTAGDDGYFRFWRVSELEVAEG), and 388–427 (FNGGSITSAALSPIDHTVVTGGEDGTIRLVDYVTPRELYK). Over residues 1155-1165 (RQEEKLREQTA) the composition is skewed to basic and acidic residues. Residues 1155–1224 (RQEEKLREQT…FGTAAARTRS (70 aa)) are disordered. The span at 1181-1190 (PATNTDTSGA) shows a compositional bias: polar residues. A compositionally biased stretch (basic and acidic residues) spans 1194-1205 (ATRRSEGEDSRK). Positions 1348–1389 (YDEARNSRDRCLREMEELQRLVQDQTASIEKLQEANKVFRRE) form a coiled coil. A disordered region spans residues 1420 to 1444 (HSDMSGNDDDITSDDDDDDDMGEDE). Residues 1425–1444 (GNDDDITSDDDDDDDMGEDE) are compositionally biased toward acidic residues.

This sequence belongs to the CFAP44 family.

Its subcellular location is the cell projection. It is found in the cilium. It localises to the flagellum. The protein localises to the cytoplasm. The protein resides in the cytoskeleton. Its subcellular location is the flagellum axoneme. Flagellar protein involved in flagellum axoneme organization and function. This is Cilia- and flagella-associated protein 44 from Trypanosoma brucei brucei (strain 927/4 GUTat10.1).